The chain runs to 495 residues: Histidine--tRNA ligase (495 aa).

The protein belongs to the class-II aminoacyl-tRNA synthetase family. In terms of assembly, homodimer.

The protein localises to the cytoplasm. It carries out the reaction tRNA(His) + L-histidine + ATP = L-histidyl-tRNA(His) + AMP + diphosphate + H(+). This chain is Histidine--tRNA ligase, found in Bartonella henselae (strain ATCC 49882 / DSM 28221 / CCUG 30454 / Houston 1) (Rochalimaea henselae).